The primary structure comprises 149 residues: Transcriptional repressor NrdR (149 aa).

Residues 3–34 (CPFCGHLETQVVETRISEDAEFIRRRRQCGAC) fold into a zinc finger. The 91-residue stretch at 49-139 (PSIVKKDGRR…VYRSFEDIDE (91 aa)) folds into the ATP-cone domain.

The protein belongs to the NrdR family. It depends on Zn(2+) as a cofactor.

In terms of biological role, negatively regulates transcription of bacterial ribonucleotide reductase nrd genes and operons by binding to NrdR-boxes. This chain is Transcriptional repressor NrdR, found in Polaromonas naphthalenivorans (strain CJ2).